A 295-amino-acid polypeptide reads, in one-letter code: Acetyl-coenzyme A carboxylase carboxyl transferase subunit beta (295 aa).

A CoA carboxyltransferase N-terminal domain is found at 25–294 (VWTKCTSCEQ…PFNAEELSDT (270 aa)). Zn(2+)-binding residues include Cys-29, Cys-32, Cys-48, and Cys-51. Residues 29–51 (CTSCEQVLYRDELKRHLEVCPKC) form a C4-type zinc finger.

The protein belongs to the AccD/PCCB family. Acetyl-CoA carboxylase is a heterohexamer composed of biotin carboxyl carrier protein (AccB), biotin carboxylase (AccC) and two subunits each of ACCase subunit alpha (AccA) and ACCase subunit beta (AccD). The cofactor is Zn(2+).

It is found in the cytoplasm. It catalyses the reaction N(6)-carboxybiotinyl-L-lysyl-[protein] + acetyl-CoA = N(6)-biotinyl-L-lysyl-[protein] + malonyl-CoA. It participates in lipid metabolism; malonyl-CoA biosynthesis; malonyl-CoA from acetyl-CoA: step 1/1. Component of the acetyl coenzyme A carboxylase (ACC) complex. Biotin carboxylase (BC) catalyzes the carboxylation of biotin on its carrier protein (BCCP) and then the CO(2) group is transferred by the transcarboxylase to acetyl-CoA to form malonyl-CoA. The polypeptide is Acetyl-coenzyme A carboxylase carboxyl transferase subunit beta (Mannheimia succiniciproducens (strain KCTC 0769BP / MBEL55E)).